A 72-amino-acid chain; its full sequence is Small proline-rich protein 2E (72 aa).

Low complexity predominate over residues 1 to 11 (MSYQQQQCKQP). The segment at 1 to 20 (MSYQQQQCKQPCQPPPVCPT) is disordered. Repeat copies occupy residues 21-29 (PKCPEPCPP), 30-38 (PKCPEPCPP), and 39-47 (PKCPQPCPP). The interval 21–47 (PKCPEPCPPPKCPEPCPPPKCPQPCPP) is 3 X 9 AA tandem repeats of P-K-C-P-[EQ]-P-C-P-P. Residues 42 to 72 (PQPCPPQQCQQKCPPVTPSPPCQPKCPPKSK) form a disordered region. A compositionally biased stretch (pro residues) spans 56 to 72 (PVTPSPPCQPKCPPKSK).

This sequence belongs to the cornifin (SPRR) family.

The protein resides in the cytoplasm. Its function is as follows. Cross-linked envelope protein of keratinocytes. It is a keratinocyte protein that first appears in the cell cytosol, but ultimately becomes cross-linked to membrane proteins by transglutaminase. All that results in the formation of an insoluble envelope beneath the plasma membrane. The protein is Small proline-rich protein 2E (SPRR2E) of Homo sapiens (Human).